Reading from the N-terminus, the 189-residue chain is MALSFSLLMAVLVLSYKSICSLGCDLPQTHSLGNRRALILLGQMGRISPFSCLKDRHDFRIPQEEFDGNQFQKAQAISVLHEMIQQTFNLFSTEDSSAAWEQSLLEKFSTELYQQLNDLEACVIQEVGVEETPLMNEDSILAVRKYFQRITLYLIERKYSPCAWEVVRAEIMRSLSFSTNLQKRLRRKD.

An N-terminal signal peptide occupies residues 1–23 (MALSFSLLMAVLVLSYKSICSLG). Cystine bridges form between Cys24–Cys122 and Cys52–Cys162.

Belongs to the alpha/beta interferon family.

The protein resides in the secreted. Its function is as follows. Produced by macrophages, IFN-alpha have antiviral activities. Interferon stimulates the production of two enzymes: a protein kinase and an oligoadenylate synthetase. This chain is Interferon alpha-10 (IFNA10), found in Homo sapiens (Human).